The primary structure comprises 170 residues: MVHAFLIHTLRAPNLEDTGLCRVLYSCVFGAEKSPDDPRSHGAERDRLFRKEQILAVARQVESLCRLQQQAAGCSSTDLQPQFSAEPVSLHEAPHGAFHLAAGDPFQEPRTVLWLGILSLGFALVLDTHENLLLAERTLRLLARLLLDHLRLLTPAVSTGAAYCRAHPSR.

Probably part of the adaptor protein complex 5 (AP-5) a tetramer composed of AP5B1, AP5M1, AP5S1 and AP5Z1. Interacts with ZFYVE26 and SPG11.

Its subcellular location is the cytoplasm. The protein resides in the cytosol. It localises to the late endosome membrane. It is found in the lysosome membrane. Functionally, as part of AP-5, a probable fifth adaptor protein complex it may be involved in endosomal transport. The polypeptide is AP-5 complex subunit sigma-1 (Ap5s1) (Mus musculus (Mouse)).